Reading from the N-terminus, the 421-residue chain is Hydrolyase poxO (421 aa).

The Nucleophile role is filled by S239.

It belongs to the AB hydrolase superfamily. FUS2 hydrolase family. Homodimer.

The protein operates within secondary metabolite biosynthesis. Hydrolyase; part of the gene cluster that mediates the biosynthesis of oxaleimides, cytotoxic compounds containing an unusual disubstituted succinimide moiety. The first step of the pathway is provided by the HR-PKS poxF that serves in a new mode of collaborative biosynthesis with the PKS-NRPS poxE, by providing the olefin containing amino acid substrate via the synthesis of an ACP-bound dec-4-enoate. The cytochrome P450 monooxygenase poxM-catalyzed oxidation at the alpha-position creates the enzyme-bound 2-hydroxydec-4-enoyl-ACP thioester, which may be prone to spontaneous hydrolysis to yield 2-hydroxydec-4-enoic acid due to increased electrophilicity of the carbonyl. 2-hydroxydec-4-enoic acid can then be further oxidized by poxM to yield the alpha-ketoacid 2-oxodec-4-enoicacid, which is reductively aminated by the aminotransferase poxL to yield (S,E)-2-aminodec-4-enoic acid. The Hybrid PKS-NRPS synthetase poxE then performs condensation between the octaketide product of its PKS modules and the amino group of (S,E)-2-aminodec-4-enoic acid which is activated and incorporated by the adenylation domain. The resulting aminoacyl product can be cyclized by the Diels-Alderase PoxQ and reductively released by the reductive (R) domain of poxE to yield an aldehyde intermediate. The released aldehyde is then substrate for a Knoevenagel condensation by the hydrolyase poxO followed by an oxidation at the 5-position of the pyrrolidone ring. The presence of the olefin from the amino acid building block allows for migration of the substituted allyl group to occur. This allylic transposition reaction takes place in a conjugate addition, semipinacol-like fashion to yield a succinimide intermediate. Iterative two-electron oxidations of the C7 methyl of the succinimide intermediate to the carboxylic acid can be catalyzed by one of two remaining cytochrome P450 monooxygenasess poxC or poxD to yield oxaleimide A. Subsequent oxidation yields the maleimide scaffold oxaleimide I. Both oxaleimide A and oxaleimide I can undergo oxidative modifications in the decalin ring to yield the series of products oxaleimides B to H. The polypeptide is Hydrolyase poxO (Penicillium oxalicum).